Here is a 660-residue protein sequence, read N- to C-terminus: Leucine-rich repeat transmembrane protein FLRT2 (660 aa).

The N-terminal stretch at 1 to 35 (MGLQTTKWPSHGAFFLKSWLIISLGLYSQVSKLLA) is a signal peptide. 2 disulfides stabilise this stretch: cysteine 36/cysteine 42 and cysteine 40/cysteine 49. Residues 36 to 63 (CPSVCRCDRNFVYCNERSLTSVPLGIPE) form the LRRNT domain. The Extracellular portion of the chain corresponds to 36-541 (CPSVCRCDRN…TTSHSMGSPF (506 aa)). LRR repeat units lie at residues 64 to 85 (GVTV…AELH), 89 to 109 (SVHT…NLPK), 110 to 131 (NVRV…ALAQ), 134 to 155 (KLEE…DGAF), 160 to 181 (SLKL…LPVD), 182 to 202 (LQEL…AFQN), 205 to 225 (SLER…AEGT), 231 to 252 (KLKE…LPGT), 253 to 274 (HLIR…AFSN), and 277 to 298 (KLER…VFDN). A glycan (N-linked (GlcNAc...) asparagine) is linked at asparagine 202. Asparagine 298 carries an N-linked (GlcNAc...) asparagine glycan. Residues 310–362 (NPWFCDCSIKWVTEWLKYIPSSLNVRGFMCQGPEQVRGMAVRELNMNLLSCPT) form the LRRCT domain. 2 disulfide bridges follow: cysteine 314–cysteine 339 and cysteine 316–cysteine 360. Residues 373–409 (APSTASPTTQPPTLSIPNPSRSYTPPTPTTSKLPTIP) show a composition bias toward low complexity. Positions 373–413 (APSTASPTTQPPTLSIPNPSRSYTPPTPTTSKLPTIPDWDG) are disordered. The 99-residue stretch at 419–517 (PPISERIQLS…ICSEATTHAS (99 aa)) folds into the Fibronectin type-III domain. Residues asparagine 433 and asparagine 521 are each glycosylated (N-linked (GlcNAc...) asparagine). The helical transmembrane segment at 542-562 (LLAGLIGGAVIFVLVVLLSVF) threads the bilayer. The Cytoplasmic portion of the chain corresponds to 563–660 (CWHMHKKGRY…SVPDLEHCHT (98 aa)).

As to quaternary structure, self-associates (via leucine-rich repeats), giving rise to homooligomers. Interacts with FGFR1. Interacts with FGFR2. Interacts (via extracellular domain) with ADGRL1/LPHN1. Interacts (via extracellular domain) with ADGRL3 (via olfactomedin-like domain). Interacts (via extracellular domain) with UNC5D (via the first Ig-like domain). Can also interact (via extracellular domain) with UNC5B, but with much lower affinity. Interacts (via extracellular domain) with FN1. In terms of processing, N-glycosylated. Post-translationally, proteolytic cleavage in the juxtamembrane region gives rise to a soluble ectodomain. Cleavage is probably effected by a metalloprotease. In terms of tissue distribution, expressed in pancreas, skeletal muscle, brain, and heart.

The protein resides in the cell membrane. The protein localises to the endoplasmic reticulum membrane. It localises to the cell junction. It is found in the focal adhesion. Its subcellular location is the secreted. The protein resides in the extracellular space. The protein localises to the extracellular matrix. It localises to the microsome membrane. It is found in the synapse. Its subcellular location is the synaptosome. Its function is as follows. Functions in cell-cell adhesion, cell migration and axon guidance. Mediates cell-cell adhesion via its interactions with ADGRL3 and probably also other latrophilins that are expressed at the surface of adjacent cells. May play a role in the migration of cortical neurons during brain development via its interaction with UNC5D. Mediates axon growth cone collapse and plays a repulsive role in neuron guidance via its interaction with UNC5D, and possibly also other UNC-5 family members. Plays a role in fibroblast growth factor-mediated signaling cascades. Required for normal organization of the cardiac basement membrane during embryogenesis, and for normal embryonic epicardium and heart morphogenesis. This chain is Leucine-rich repeat transmembrane protein FLRT2 (FLRT2), found in Homo sapiens (Human).